The primary structure comprises 395 residues: NADH-quinone oxidoreductase subunit D (395 aa).

This sequence belongs to the complex I 49 kDa subunit family. In terms of assembly, NDH-1 is composed of 14 different subunits. Subunits NuoB, C, D, E, F, and G constitute the peripheral sector of the complex.

The protein localises to the cell inner membrane. It catalyses the reaction a quinone + NADH + 5 H(+)(in) = a quinol + NAD(+) + 4 H(+)(out). Its function is as follows. NDH-1 shuttles electrons from NADH, via FMN and iron-sulfur (Fe-S) centers, to quinones in the respiratory chain. The immediate electron acceptor for the enzyme in this species is believed to be ubiquinone. Couples the redox reaction to proton translocation (for every two electrons transferred, four hydrogen ions are translocated across the cytoplasmic membrane), and thus conserves the redox energy in a proton gradient. The chain is NADH-quinone oxidoreductase subunit D from Anaplasma phagocytophilum (strain HZ).